Consider the following 612-residue polypeptide: tRNA uridine 5-carboxymethylaminomethyl modification enzyme MnmG (612 aa).

9–14 contacts FAD; that stretch reads GAGHAG. 270–284 serves as a coordination point for NAD(+); sequence GPLYCPSIEDKVFKF.

It belongs to the MnmG family. As to quaternary structure, homodimer. Heterotetramer of two MnmE and two MnmG subunits. FAD serves as cofactor.

The protein resides in the cytoplasm. NAD-binding protein involved in the addition of a carboxymethylaminomethyl (cmnm) group at the wobble position (U34) of certain tRNAs, forming tRNA-cmnm(5)s(2)U34. In Mycoplasma genitalium (strain ATCC 33530 / DSM 19775 / NCTC 10195 / G37) (Mycoplasmoides genitalium), this protein is tRNA uridine 5-carboxymethylaminomethyl modification enzyme MnmG.